A 464-amino-acid polypeptide reads, in one-letter code: MSKFFERDDDIVALATPFLSSALCVIRSSGASSISKFSKIFSNHSALNSASGNTIHYGYILDSENGCKVDEVVVCLYRAPKSFTGQDAIEVMAHGSVIGIKKIIDLFLKSGFRMAEPGEFTLRAFLAKKIDLTKAEAIHEIIFAKTNKTYSLAVNKLSGALFVKIDAIKKSILNFLSAVSVYLDYEVDDHEISIPFDLILSSKAELKKLINSYKVYEKIDNGVALVLAGSVNAGKSSLFNLFLKKDRSIVSSYPGTTRDYIEASFELDGILFNLFDTAGLRDADNFVERLGIEKSNSLIKEASLVIYVIDVSSNLTKDDFLFIDSNKSNSKILFVLNKIDLKINKSTEEFVRSKVLNSSNLIMISTKNLEGIDILYDKIRALISYERVEIGLDDIIISSNRQMQLLEKAYALILDLLSKIDRQVSYDMLAFDAYEIINCLGEITGEVSSEDVLDNMFKNFCLGK.

(6S)-5-formyl-5,6,7,8-tetrahydrofolate is bound by residues Arg27, Glu90, and Lys129. The TrmE-type G domain maps to 222 to 384 (GVALVLAGSV…LYDKIRALIS (163 aa)). GTP is bound by residues 232 to 237 (NAGKSS), 251 to 257 (SSYPGTT), and 276 to 279 (DTAG). Positions 236 and 257 each coordinate Mg(2+). Lys464 provides a ligand contact to (6S)-5-formyl-5,6,7,8-tetrahydrofolate.

This sequence belongs to the TRAFAC class TrmE-Era-EngA-EngB-Septin-like GTPase superfamily. TrmE GTPase family. Homodimer. Heterotetramer of two MnmE and two MnmG subunits. K(+) is required as a cofactor.

The protein localises to the cytoplasm. Its function is as follows. Exhibits a very high intrinsic GTPase hydrolysis rate. Involved in the addition of a carboxymethylaminomethyl (cmnm) group at the wobble position (U34) of certain tRNAs, forming tRNA-cmnm(5)s(2)U34. In Borreliella burgdorferi (strain ATCC 35210 / DSM 4680 / CIP 102532 / B31) (Borrelia burgdorferi), this protein is tRNA modification GTPase MnmE.